A 119-amino-acid polypeptide reads, in one-letter code: Large ribosomal subunit protein bL20 (119 aa).

It belongs to the bacterial ribosomal protein bL20 family.

In terms of biological role, binds directly to 23S ribosomal RNA and is necessary for the in vitro assembly process of the 50S ribosomal subunit. It is not involved in the protein synthesizing functions of that subunit. The sequence is that of Large ribosomal subunit protein bL20 from Geobacillus sp. (strain WCH70).